A 109-amino-acid chain; its full sequence is Cell division protein ZapA (109 aa).

The stretch at proline 21–arginine 99 forms a coiled coil.

It belongs to the ZapA family. Type 1 subfamily. In terms of assembly, homodimer. Interacts with FtsZ.

The protein localises to the cytoplasm. Functionally, activator of cell division through the inhibition of FtsZ GTPase activity, therefore promoting FtsZ assembly into bundles of protofilaments necessary for the formation of the division Z ring. It is recruited early at mid-cell but it is not essential for cell division. The polypeptide is Cell division protein ZapA (Klebsiella pneumoniae subsp. pneumoniae (strain ATCC 700721 / MGH 78578)).